The chain runs to 336 residues: 4-hydroxy-3-methylbut-2-enyl diphosphate reductase (336 aa).

The interval 1–23 (MFGQRLDTLGAMSSSVSSPSPET) is disordered. Cys36 contributes to the [4Fe-4S] cluster binding site. Positions 65 and 98 each coordinate (2E)-4-hydroxy-3-methylbut-2-enyl diphosphate. Residues His65 and His98 each contribute to the dimethylallyl diphosphate site. Residues His65 and His98 each contribute to the isopentenyl diphosphate site. A [4Fe-4S] cluster-binding site is contributed by Cys120. (2E)-4-hydroxy-3-methylbut-2-enyl diphosphate is bound at residue His148. Position 148 (His148) interacts with dimethylallyl diphosphate. Isopentenyl diphosphate is bound at residue His148. Catalysis depends on Glu150, which acts as the Proton donor. Thr190 is a (2E)-4-hydroxy-3-methylbut-2-enyl diphosphate binding site. Residue Cys220 coordinates [4Fe-4S] cluster. Positions 248, 249, 250, and 293 each coordinate (2E)-4-hydroxy-3-methylbut-2-enyl diphosphate. Ser248, Ser249, Asn250, and Ser293 together coordinate dimethylallyl diphosphate. The isopentenyl diphosphate site is built by Ser248, Ser249, Asn250, and Ser293.

Belongs to the IspH family. [4Fe-4S] cluster is required as a cofactor.

It catalyses the reaction isopentenyl diphosphate + 2 oxidized [2Fe-2S]-[ferredoxin] + H2O = (2E)-4-hydroxy-3-methylbut-2-enyl diphosphate + 2 reduced [2Fe-2S]-[ferredoxin] + 2 H(+). It carries out the reaction dimethylallyl diphosphate + 2 oxidized [2Fe-2S]-[ferredoxin] + H2O = (2E)-4-hydroxy-3-methylbut-2-enyl diphosphate + 2 reduced [2Fe-2S]-[ferredoxin] + 2 H(+). It functions in the pathway isoprenoid biosynthesis; dimethylallyl diphosphate biosynthesis; dimethylallyl diphosphate from (2E)-4-hydroxy-3-methylbutenyl diphosphate: step 1/1. Its pathway is isoprenoid biosynthesis; isopentenyl diphosphate biosynthesis via DXP pathway; isopentenyl diphosphate from 1-deoxy-D-xylulose 5-phosphate: step 6/6. Catalyzes the conversion of 1-hydroxy-2-methyl-2-(E)-butenyl 4-diphosphate (HMBPP) into a mixture of isopentenyl diphosphate (IPP) and dimethylallyl diphosphate (DMAPP). Acts in the terminal step of the DOXP/MEP pathway for isoprenoid precursor biosynthesis. The sequence is that of 4-hydroxy-3-methylbut-2-enyl diphosphate reductase from Corynebacterium efficiens (strain DSM 44549 / YS-314 / AJ 12310 / JCM 11189 / NBRC 100395).